The chain runs to 158 residues: NAD(P)H-quinone oxidoreductase subunit N (158 aa).

Belongs to the complex I NdhN subunit family. In terms of assembly, NDH-1 can be composed of about 15 different subunits; different subcomplexes with different compositions have been identified which probably have different functions.

The protein resides in the cellular thylakoid membrane. The enzyme catalyses a plastoquinone + NADH + (n+1) H(+)(in) = a plastoquinol + NAD(+) + n H(+)(out). The catalysed reaction is a plastoquinone + NADPH + (n+1) H(+)(in) = a plastoquinol + NADP(+) + n H(+)(out). NDH-1 shuttles electrons from an unknown electron donor, via FMN and iron-sulfur (Fe-S) centers, to quinones in the respiratory and/or the photosynthetic chain. The immediate electron acceptor for the enzyme in this species is believed to be plastoquinone. Couples the redox reaction to proton translocation, and thus conserves the redox energy in a proton gradient. Cyanobacterial NDH-1 also plays a role in inorganic carbon-concentration. This Nostoc punctiforme (strain ATCC 29133 / PCC 73102) protein is NAD(P)H-quinone oxidoreductase subunit N.